Reading from the N-terminus, the 545-residue chain is CTP synthase (545 aa).

Residues Met-1–Met-267 are amidoligase domain. Ser-13 provides a ligand contact to CTP. Ser-13 lines the UTP pocket. Residues Ser-14–Ile-19 and Asp-71 each bind ATP. 2 residues coordinate Mg(2+): Asp-71 and Glu-141. CTP contacts are provided by residues Asp-148 to Glu-150, Lys-188 to Gln-193, and Lys-224. UTP is bound by residues Lys-188 to Gln-193 and Lys-224. The 243-residue stretch at Glu-292–Ser-534 folds into the Glutamine amidotransferase type-1 domain. Residue Gly-354 participates in L-glutamine binding. Cys-381 serves as the catalytic Nucleophile; for glutamine hydrolysis. Residues Leu-382–Gln-385, Glu-405, and Arg-462 each bind L-glutamine. Catalysis depends on residues His-507 and Glu-509.

The protein belongs to the CTP synthase family. Homotetramer.

It carries out the reaction UTP + L-glutamine + ATP + H2O = CTP + L-glutamate + ADP + phosphate + 2 H(+). The enzyme catalyses L-glutamine + H2O = L-glutamate + NH4(+). It catalyses the reaction UTP + NH4(+) + ATP = CTP + ADP + phosphate + 2 H(+). It functions in the pathway pyrimidine metabolism; CTP biosynthesis via de novo pathway; CTP from UDP: step 2/2. Its activity is regulated as follows. Allosterically activated by GTP, when glutamine is the substrate; GTP has no effect on the reaction when ammonia is the substrate. The allosteric effector GTP functions by stabilizing the protein conformation that binds the tetrahedral intermediate(s) formed during glutamine hydrolysis. Inhibited by the product CTP, via allosteric rather than competitive inhibition. Its function is as follows. Catalyzes the ATP-dependent amination of UTP to CTP with either L-glutamine or ammonia as the source of nitrogen. Regulates intracellular CTP levels through interactions with the four ribonucleotide triphosphates. This Nostoc punctiforme (strain ATCC 29133 / PCC 73102) protein is CTP synthase.